The sequence spans 308 residues: Aspartate carbamoyltransferase catalytic subunit (308 aa).

Residues Arg57 and Thr58 each contribute to the carbamoyl phosphate site. Lys86 provides a ligand contact to L-aspartate. Positions 107, 135, and 138 each coordinate carbamoyl phosphate. L-aspartate-binding residues include Arg168 and Arg229. Carbamoyl phosphate-binding residues include Leu268 and Pro269.

This sequence belongs to the aspartate/ornithine carbamoyltransferase superfamily. ATCase family. As to quaternary structure, heterooligomer of catalytic and regulatory chains.

It carries out the reaction carbamoyl phosphate + L-aspartate = N-carbamoyl-L-aspartate + phosphate + H(+). The protein operates within pyrimidine metabolism; UMP biosynthesis via de novo pathway; (S)-dihydroorotate from bicarbonate: step 2/3. In terms of biological role, catalyzes the condensation of carbamoyl phosphate and aspartate to form carbamoyl aspartate and inorganic phosphate, the committed step in the de novo pyrimidine nucleotide biosynthesis pathway. The sequence is that of Aspartate carbamoyltransferase catalytic subunit from Pyrococcus horikoshii (strain ATCC 700860 / DSM 12428 / JCM 9974 / NBRC 100139 / OT-3).